Consider the following 490-residue polypeptide: Glutamate--tRNA ligase (490 aa).

The short motif at Pro-9 to Gly-19 is the 'HIGH' region element. Residues Lys-251–Arg-255 carry the 'KMSKS' region motif. Residue Lys-254 participates in ATP binding.

The protein belongs to the class-I aminoacyl-tRNA synthetase family. Glutamate--tRNA ligase type 1 subfamily. In terms of assembly, monomer.

It localises to the cytoplasm. It carries out the reaction tRNA(Glu) + L-glutamate + ATP = L-glutamyl-tRNA(Glu) + AMP + diphosphate. Its function is as follows. Catalyzes the attachment of glutamate to tRNA(Glu) in a two-step reaction: glutamate is first activated by ATP to form Glu-AMP and then transferred to the acceptor end of tRNA(Glu). The polypeptide is Glutamate--tRNA ligase (Borreliella burgdorferi (strain ATCC 35210 / DSM 4680 / CIP 102532 / B31) (Borrelia burgdorferi)).